A 397-amino-acid chain; its full sequence is Succinate--CoA ligase [ADP-forming] subunit beta (397 aa).

Positions 9 to 254 (KALLKSFGAP…KSEEDEKEIQ (246 aa)) constitute an ATP-grasp domain. ATP contacts are provided by residues lysine 46, 53 to 55 (GRG), glutamate 109, alanine 112, and glutamate 117. The Mg(2+) site is built by asparagine 209 and aspartate 223. Residues asparagine 274 and 331 to 333 (GIM) each bind substrate.

This sequence belongs to the succinate/malate CoA ligase beta subunit family. As to quaternary structure, heterotetramer of two alpha and two beta subunits. Mg(2+) is required as a cofactor.

The enzyme catalyses succinate + ATP + CoA = succinyl-CoA + ADP + phosphate. It carries out the reaction GTP + succinate + CoA = succinyl-CoA + GDP + phosphate. Its pathway is carbohydrate metabolism; tricarboxylic acid cycle; succinate from succinyl-CoA (ligase route): step 1/1. Its function is as follows. Succinyl-CoA synthetase functions in the citric acid cycle (TCA), coupling the hydrolysis of succinyl-CoA to the synthesis of either ATP or GTP and thus represents the only step of substrate-level phosphorylation in the TCA. The beta subunit provides nucleotide specificity of the enzyme and binds the substrate succinate, while the binding sites for coenzyme A and phosphate are found in the alpha subunit. The protein is Succinate--CoA ligase [ADP-forming] subunit beta of Rhizobium rhizogenes (strain K84 / ATCC BAA-868) (Agrobacterium radiobacter).